The following is a 757-amino-acid chain: Polyribonucleotide nucleotidyltransferase (757 aa).

Residues aspartate 525 and aspartate 531 each contribute to the Mg(2+) site. One can recognise a KH domain in the interval 591–650 (PRVISVNIPVDKIGELIGPKGKTINAIQDETGADISIEEDGTVYIGAVDGPSADAARAQV). One can recognise an S1 motif domain in the interval 662 to 734 (GESFLGTVVK…DRGKLSLAPV (73 aa)). The segment at 737–757 (ETADQEGRDAASHGSEAPAEG) is disordered.

Belongs to the polyribonucleotide nucleotidyltransferase family. Requires Mg(2+) as cofactor.

The protein localises to the cytoplasm. The enzyme catalyses RNA(n+1) + phosphate = RNA(n) + a ribonucleoside 5'-diphosphate. Involved in mRNA degradation. Catalyzes the phosphorolysis of single-stranded polyribonucleotides processively in the 3'- to 5'-direction. The sequence is that of Polyribonucleotide nucleotidyltransferase from Clavibacter michiganensis subsp. michiganensis (strain NCPPB 382).